Consider the following 115-residue polypeptide: Small ribosomal subunit protein bS6 (115 aa).

It belongs to the bacterial ribosomal protein bS6 family.

Functionally, binds together with bS18 to 16S ribosomal RNA. In Picosynechococcus sp. (strain ATCC 27264 / PCC 7002 / PR-6) (Agmenellum quadruplicatum), this protein is Small ribosomal subunit protein bS6.